Consider the following 390-residue polypeptide: Succinyl-diaminopimelate desuccinylase (390 aa).

Histidine 74 is a binding site for Zn(2+). Aspartate 76 is a catalytic residue. Aspartate 107 provides a ligand contact to Zn(2+). The active-site Proton acceptor is the glutamate 140. Positions 141, 169, and 363 each coordinate Zn(2+).

It belongs to the peptidase M20A family. DapE subfamily. Homodimer. The cofactor is Zn(2+). Co(2+) serves as cofactor.

It carries out the reaction N-succinyl-(2S,6S)-2,6-diaminopimelate + H2O = (2S,6S)-2,6-diaminopimelate + succinate. It functions in the pathway amino-acid biosynthesis; L-lysine biosynthesis via DAP pathway; LL-2,6-diaminopimelate from (S)-tetrahydrodipicolinate (succinylase route): step 3/3. Functionally, catalyzes the hydrolysis of N-succinyl-L,L-diaminopimelic acid (SDAP), forming succinate and LL-2,6-diaminopimelate (DAP), an intermediate involved in the bacterial biosynthesis of lysine and meso-diaminopimelic acid, an essential component of bacterial cell walls. This is Succinyl-diaminopimelate desuccinylase from Bartonella henselae (strain ATCC 49882 / DSM 28221 / CCUG 30454 / Houston 1) (Rochalimaea henselae).